Reading from the N-terminus, the 133-residue chain is Large ribosomal subunit protein uL16c (133 aa).

The protein belongs to the universal ribosomal protein uL16 family. Part of the 50S ribosomal subunit.

The protein localises to the plastid. The sequence is that of Large ribosomal subunit protein uL16c from Euglena longa (Euglenophycean alga).